The chain runs to 143 residues: Large ribosomal subunit protein uL15 (143 aa).

Residues 1 to 51 are disordered; sequence MELNGIKPAAGAKHAKRRVGRGIGSGIGKTAGRGHKGQKSRAGGFHKVGFE. Residues 21–31 are compositionally biased toward gly residues; it reads RGIGSGIGKTA.

This sequence belongs to the universal ribosomal protein uL15 family. In terms of assembly, part of the 50S ribosomal subunit.

Functionally, binds to the 23S rRNA. This is Large ribosomal subunit protein uL15 from Variovorax paradoxus (strain S110).